The chain runs to 280 residues: Ribosomal RNA small subunit methyltransferase A (280 aa).

S-adenosyl-L-methionine contacts are provided by H15, L17, G42, E64, D89, and N109.

The protein belongs to the class I-like SAM-binding methyltransferase superfamily. rRNA adenine N(6)-methyltransferase family. RsmA subfamily.

The protein resides in the cytoplasm. It catalyses the reaction adenosine(1518)/adenosine(1519) in 16S rRNA + 4 S-adenosyl-L-methionine = N(6)-dimethyladenosine(1518)/N(6)-dimethyladenosine(1519) in 16S rRNA + 4 S-adenosyl-L-homocysteine + 4 H(+). Specifically dimethylates two adjacent adenosines (A1518 and A1519) in the loop of a conserved hairpin near the 3'-end of 16S rRNA in the 30S particle. May play a critical role in biogenesis of 30S subunits. In Prochlorococcus marinus (strain MIT 9313), this protein is Ribosomal RNA small subunit methyltransferase A.